A 607-amino-acid polypeptide reads, in one-letter code: Acyl-coenzyme A thioesterase 11 (607 aa).

The transit peptide at 1-13 directs the protein to the mitochondrion; sequence MIQNVGNHLRRGL. A phosphoserine mark is found at serine 15 and serine 25. One can recognise a HotDog ACOT-type 1 domain in the interval 43-155; sequence NPTEVQMSQL…LATFVARREI (113 aa). CoA contacts are provided by residues 91–93, 120–122, arginine 181, and 271–273; these read TAS, NSS, and HFR. Positions 216 to 329 constitute a HotDog ACOT-type 2 domain; the sequence is EKTRVESVEL…FMTFVVLDAD (114 aa). The START domain occupies 375-585; that stretch reads LSVPWDPSNQ…GWNGKLAGGH (211 aa).

As to expression, isoform 1 is predominantly expressed in skeletal muscle, liver, testis, stomach, spleen, lung and brain. Isoform 2 is predominantly expressed in kidney, uterus, hibernoma and white adipose tissue.

Its subcellular location is the mitochondrion matrix. The protein resides in the cytoplasm. The enzyme catalyses hexadecanoyl-CoA + H2O = hexadecanoate + CoA + H(+). The catalysed reaction is tetradecanoyl-CoA + H2O = tetradecanoate + CoA + H(+). It catalyses the reaction dodecanoyl-CoA + H2O = dodecanoate + CoA + H(+). It carries out the reaction butanoyl-CoA + H2O = butanoate + CoA + H(+). Its pathway is lipid metabolism; fatty acid metabolism. In terms of biological role, has an acyl-CoA thioesterase activity with a preference for the long chain fatty acyl-CoA thioesters hexadecanoyl-CoA/palmitoyl-CoA and tetradecanoyl-CoA/myristoyl-CoA which are the main substrates in the mitochondrial beta-oxidation pathway. The chain is Acyl-coenzyme A thioesterase 11 (ACOT11) from Homo sapiens (Human).